A 419-amino-acid polypeptide reads, in one-letter code: Transcription termination factor Rho (419 aa).

One can recognise a Rho RNA-BD domain in the interval 48-123 (DIFGDGVLEI…LKVNAVNYDK (76 aa)). RNA-binding stretches follow at residues 61–66 (GFGFLR), 78–80 (DIY), and 108–110 (ERY). ATP is bound by residues 169–174 (GRGQRG), 181–186 (KAGKTI), and Arg-212. Residues 284–288 (VLTGG) form an RNA-binding 2 region.

Belongs to the Rho family. As to quaternary structure, homohexamer. The homohexamer assembles into an open ring structure.

Its function is as follows. Facilitates transcription termination by a mechanism that involves Rho binding to the nascent RNA, activation of Rho's RNA-dependent ATPase activity, and release of the mRNA from the DNA template. In Buchnera aphidicola subsp. Schizaphis graminum (strain Sg), this protein is Transcription termination factor Rho.